Consider the following 296-residue polypeptide: Protein csh3 (296 aa).

The interval 46-138 (ASPVTAPAAQ…PPSYPGPNTA (93 aa)) is disordered. The span at 93–103 (GEKRTPEEPRK) shows a compositional bias: basic and acidic residues. Residues 111-124 (QKQSEASSVNSSTE) are compositionally biased toward polar residues. One can recognise an SH3 domain in the interval 140–199 (KNVERVLAMYDFPGPDAGDLGFHAGEVIIVLEHVNNDWWRGELNGKEGIFPSNYVRLLED). A disordered region spans residues 202–246 (VKAQPPPPPPQQNYPPAASSSAPPMQYQQTAYPPQQAPYPPVQAY). Residues 205–214 (QPPPPPPQQN) show a composition bias toward pro residues. Positions 215–235 (YPPAASSSAPPMQYQQTAYPP) are enriched in low complexity.

The polypeptide is Protein csh3 (csh3) (Schizosaccharomyces pombe (strain 972 / ATCC 24843) (Fission yeast)).